The primary structure comprises 188 residues: Elongation factor P (188 aa).

It belongs to the elongation factor P family.

The protein resides in the cytoplasm. Its pathway is protein biosynthesis; polypeptide chain elongation. Involved in peptide bond synthesis. Stimulates efficient translation and peptide-bond synthesis on native or reconstituted 70S ribosomes in vitro. Probably functions indirectly by altering the affinity of the ribosome for aminoacyl-tRNA, thus increasing their reactivity as acceptors for peptidyl transferase. This chain is Elongation factor P, found in Wolbachia sp. subsp. Drosophila simulans (strain wRi).